The following is a 218-amino-acid chain: Mediator of RNA polymerase II transcription subunit 20 (218 aa).

Belongs to the Mediator complex subunit 20 family. Component of the Mediator complex.

The protein resides in the nucleus. Component of the Mediator complex, a coactivator involved in the regulated transcription of nearly all RNA polymerase II-dependent genes. Mediator functions as a bridge to convey information from gene-specific regulatory proteins to the basal RNA polymerase II transcription machinery. Mediator is recruited to promoters by direct interactions with regulatory proteins and serves as a scaffold for the assembly of a functional preinitiation complex with RNA polymerase II and the general transcription factors. This Yarrowia lipolytica (strain CLIB 122 / E 150) (Yeast) protein is Mediator of RNA polymerase II transcription subunit 20 (SRB2).